The following is a 352-amino-acid chain: Phosphoribosylformylglycinamidine cyclo-ligase (352 aa).

The protein belongs to the AIR synthase family.

It localises to the cytoplasm. It carries out the reaction 2-formamido-N(1)-(5-O-phospho-beta-D-ribosyl)acetamidine + ATP = 5-amino-1-(5-phospho-beta-D-ribosyl)imidazole + ADP + phosphate + H(+). Its pathway is purine metabolism; IMP biosynthesis via de novo pathway; 5-amino-1-(5-phospho-D-ribosyl)imidazole from N(2)-formyl-N(1)-(5-phospho-D-ribosyl)glycinamide: step 2/2. In Coxiella burnetii (strain RSA 331 / Henzerling II), this protein is Phosphoribosylformylglycinamidine cyclo-ligase.